The primary structure comprises 489 residues: Phenylalanine--tRNA ligase alpha subunit (489 aa).

L-phenylalanine-binding positions include T316, 355-357 (QLD), F395, and F420.

Belongs to the class-II aminoacyl-tRNA synthetase family. Phe-tRNA synthetase alpha subunit type 2 subfamily. As to quaternary structure, tetramer of two alpha and two beta subunits. Mg(2+) is required as a cofactor.

The protein localises to the cytoplasm. It carries out the reaction tRNA(Phe) + L-phenylalanine + ATP = L-phenylalanyl-tRNA(Phe) + AMP + diphosphate + H(+). The polypeptide is Phenylalanine--tRNA ligase alpha subunit (Pyrobaculum aerophilum (strain ATCC 51768 / DSM 7523 / JCM 9630 / CIP 104966 / NBRC 100827 / IM2)).